The chain runs to 297 residues: Phosphatidylglycerol--prolipoprotein diacylglyceryl transferase (297 aa).

A run of 4 helical transmembrane segments spans residues 20–40 (FITIRWYGLLISVSVLIGLFI), 57–77 (EILPSLIIFSIIGARAYYVIF), 107–127 (WEGGIAIHGGLIGGLISIIFF), and 133–153 (IHLKTFIDILIPSIILGQSIG). Arg154 contacts a 1,2-diacyl-sn-glycero-3-phospho-(1'-sn-glycerol). Transmembrane regions (helical) follow at residues 193-213 (PTFLYESLWNLLVFIFLILIF), 225-245 (GFISCLYLICYSFGRFWIEGL), and 266-286 (AQFISIFLFSSGLIGIFFLRL).

It belongs to the Lgt family.

The protein localises to the cell inner membrane. It carries out the reaction L-cysteinyl-[prolipoprotein] + a 1,2-diacyl-sn-glycero-3-phospho-(1'-sn-glycerol) = an S-1,2-diacyl-sn-glyceryl-L-cysteinyl-[prolipoprotein] + sn-glycerol 1-phosphate + H(+). Its pathway is protein modification; lipoprotein biosynthesis (diacylglyceryl transfer). Its function is as follows. Catalyzes the transfer of the diacylglyceryl group from phosphatidylglycerol to the sulfhydryl group of the N-terminal cysteine of a prolipoprotein, the first step in the formation of mature lipoproteins. The protein is Phosphatidylglycerol--prolipoprotein diacylglyceryl transferase of Prochlorococcus marinus (strain MIT 9301).